The following is a 606-amino-acid chain: Elongation factor 4 (606 aa).

The tr-type G domain maps to 10 to 192 (ENIRNFSIIA…AIVQQLPAPK (183 aa)). Residues 22–27 (DHGKST) and 139–142 (NKID) each bind GTP.

It belongs to the TRAFAC class translation factor GTPase superfamily. Classic translation factor GTPase family. LepA subfamily.

The protein localises to the cell membrane. The catalysed reaction is GTP + H2O = GDP + phosphate + H(+). Functionally, required for accurate and efficient protein synthesis under certain stress conditions. May act as a fidelity factor of the translation reaction, by catalyzing a one-codon backward translocation of tRNAs on improperly translocated ribosomes. Back-translocation proceeds from a post-translocation (POST) complex to a pre-translocation (PRE) complex, thus giving elongation factor G a second chance to translocate the tRNAs correctly. Binds to ribosomes in a GTP-dependent manner. This is Elongation factor 4 from Lawsonia intracellularis (strain PHE/MN1-00).